The sequence spans 92 residues: Acylphosphatase (92 aa).

Cysteine 5 and cysteine 49 are joined by a disulfide. The Acylphosphatase-like domain maps to 5–92 (CIIAWIYGRV…SGELTDFRIR (88 aa)). Active-site residues include arginine 20 and asparagine 38.

This sequence belongs to the acylphosphatase family.

It carries out the reaction an acyl phosphate + H2O = a carboxylate + phosphate + H(+). The protein is Acylphosphatase of Escherichia coli O1:K1 / APEC.